A 137-amino-acid polypeptide reads, in one-letter code: NADPH-dependent 7-cyano-7-deazaguanine reductase (137 aa).

Cys50 serves as the catalytic Thioimide intermediate. The active-site Proton donor is the Asp57. Residues 72-74 (VEL) and 91-92 (HE) contribute to the substrate site.

This sequence belongs to the GTP cyclohydrolase I family. QueF type 1 subfamily.

Its subcellular location is the cytoplasm. It carries out the reaction 7-aminomethyl-7-carbaguanine + 2 NADP(+) = 7-cyano-7-deazaguanine + 2 NADPH + 3 H(+). It participates in tRNA modification; tRNA-queuosine biosynthesis. Its function is as follows. Catalyzes the NADPH-dependent reduction of 7-cyano-7-deazaguanine (preQ0) to 7-aminomethyl-7-deazaguanine (preQ1). This chain is NADPH-dependent 7-cyano-7-deazaguanine reductase, found in Synechocystis sp. (strain ATCC 27184 / PCC 6803 / Kazusa).